Consider the following 275-residue polypeptide: Trans-aconitate 2-methyltransferase (275 aa).

This sequence belongs to the methyltransferase superfamily. Tam family.

The protein resides in the cytoplasm. The catalysed reaction is trans-aconitate + S-adenosyl-L-methionine = (E)-3-(methoxycarbonyl)pent-2-enedioate + S-adenosyl-L-homocysteine. Its function is as follows. Catalyzes the S-adenosylmethionine monomethyl esterification of trans-aconitate. The protein is Trans-aconitate 2-methyltransferase of Pseudomonas aeruginosa (strain UCBPP-PA14).